The following is a 144-amino-acid chain: 3-hydroxyacyl-[acyl-carrier-protein] dehydratase FabZ (144 aa).

H47 is a catalytic residue.

Belongs to the thioester dehydratase family. FabZ subfamily.

Its subcellular location is the cytoplasm. The enzyme catalyses a (3R)-hydroxyacyl-[ACP] = a (2E)-enoyl-[ACP] + H2O. Its function is as follows. Involved in unsaturated fatty acids biosynthesis. Catalyzes the dehydration of short chain beta-hydroxyacyl-ACPs and long chain saturated and unsaturated beta-hydroxyacyl-ACPs. In Nitrosomonas eutropha (strain DSM 101675 / C91 / Nm57), this protein is 3-hydroxyacyl-[acyl-carrier-protein] dehydratase FabZ.